The primary structure comprises 455 residues: Ribulose bisphosphate carboxylase large chain (455 aa).

Lys5 is modified (N6,N6,N6-trimethyllysine). Substrate contacts are provided by Asn114 and Thr164. Residue Lys166 is the Proton acceptor of the active site. Lys168 contributes to the substrate binding site. Mg(2+) contacts are provided by Lys192, Asp194, and Glu195. Lys192 is modified (N6-carboxylysine). His285 acts as the Proton acceptor in catalysis. Positions 286, 318, and 370 each coordinate substrate.

It belongs to the RuBisCO large chain family. Type I subfamily. In terms of assembly, heterohexadecamer of 8 large chains and 8 small chains; disulfide-linked. The disulfide link is formed within the large subunit homodimers. Requires Mg(2+) as cofactor. Post-translationally, the disulfide bond which can form in the large chain dimeric partners within the hexadecamer appears to be associated with oxidative stress and protein turnover.

The protein localises to the plastid. It is found in the chloroplast. The enzyme catalyses 2 (2R)-3-phosphoglycerate + 2 H(+) = D-ribulose 1,5-bisphosphate + CO2 + H2O. The catalysed reaction is D-ribulose 1,5-bisphosphate + O2 = 2-phosphoglycolate + (2R)-3-phosphoglycerate + 2 H(+). Functionally, ruBisCO catalyzes two reactions: the carboxylation of D-ribulose 1,5-bisphosphate, the primary event in carbon dioxide fixation, as well as the oxidative fragmentation of the pentose substrate in the photorespiration process. Both reactions occur simultaneously and in competition at the same active site. The polypeptide is Ribulose bisphosphate carboxylase large chain (Senna didymobotrya (Popcorn cassia)).